Reading from the N-terminus, the 173-residue chain is Calcium-binding protein 5 (173 aa).

EF-hand domains follow at residues 28-63 (DELD…MGYM), 82-99 (GRVD…KLLA), 105-140 (IGVQ…LLGE), and 142-173 (LTPR…MMSR). D41, D43, D45, and D52 together coordinate Ca(2+). Residues D118, N120, D122, E124, E129, D155, N157, D159, T161, and E166 each coordinate Ca(2+).

Interacts with CACNA1C (via C-terminal CDB motif) in a calcium-dependent manner. Interacts with STXBP1. Interacts with MYO6. In terms of tissue distribution, expressed in inner and outer plexiform layers of the retina, and retinal bipolar cells (at protein level). Expressed in the inner hair cells (IHC) of the cochlea.

The protein localises to the cytoplasm. In terms of biological role, inhibits calcium-dependent inactivation of L-type calcium channel and shifts voltage dependence of activation to more depolarized membrane potentials. Involved in the transmission of light signals. May positively regulate neurotransmitter vesicle endocytosis and exocytosis in a salt-dependent manner. May play a role in the extension and network organization of neurites. This is Calcium-binding protein 5 (Cabp5) from Mus musculus (Mouse).